The sequence spans 541 residues: Berberine bridge enzyme-like 24 (541 aa).

The signal sequence occupies residues 1 to 32; sequence MGNSKPLPTISCIIVSVLYFSFYCITPTSSSA. A disulfide bond links cysteine 41 and cysteine 105. Asparagine 62 carries an N-linked (GlcNAc...) asparagine glycan. The FAD-binding PCMH-type domain maps to 83–259; sequence SMPKPGFIFR…LAWKIKLVPV (177 aa). Positions 120–184 form a cross-link, 6-(S-cysteinyl)-8alpha-(pros-histidyl)-FAD (His-Cys); the sequence is HDFEALSYVS…KIHGFPAGLC (65 aa). N-linked (GlcNAc...) asparagine glycosylation is found at asparagine 309, asparagine 408, and asparagine 435.

The protein belongs to the oxygen-dependent FAD-linked oxidoreductase family. Requires FAD as cofactor. In terms of processing, the FAD cofactor is bound via a bicovalent 6-S-cysteinyl, 8alpha-N1-histidyl FAD linkage.

It is found in the secreted. It localises to the cell wall. The protein is Berberine bridge enzyme-like 24 of Arabidopsis thaliana (Mouse-ear cress).